An 840-amino-acid chain; its full sequence is Heat shock 70 kDa protein 4 (840 aa).

At Lys53 the chain carries N6-acetyllysine. At Ser76 the chain carries Phosphoserine. Tyr89 and Tyr336 each carry phosphotyrosine. 2 positions are modified to phosphoserine: Ser393 and Ser415. Lys430 carries the post-translational modification N6-acetyllysine. A disordered region spans residues 500–575 (VHKSEENEEP…QAKKAKVKTS (76 aa)). Over residues 514 to 533 (QNAKEEEKMQVDQEEPHVEE) the composition is skewed to basic and acidic residues. Thr538 bears the Phosphothreonine mark. 2 positions are modified to phosphoserine: Ser546 and Ser647. The residue at position 660 (Tyr660) is a Phosphotyrosine. Residue Lys679 is modified to N6-acetyllysine. Ser756 is subject to Phosphoserine. Lys773 carries the post-translational modification N6-methyllysine. A disordered region spans residues 783-840 (ISKPKPKVEPPKEEQKNAEQNGPVDGQGDNPGPQAAEQGTDAAVPSDSDKKLPEMDID). 2 stretches are compositionally biased toward basic and acidic residues: residues 788–799 (PKVEPPKEEQKN) and 829–840 (DSDKKLPEMDID).

This sequence belongs to the heat shock protein 70 family. Interacts with TJP1/ZO-1.

The protein localises to the cytoplasm. The sequence is that of Heat shock 70 kDa protein 4 (HSPA4) from Pongo abelii (Sumatran orangutan).